The following is a 630-amino-acid chain: Phosphomethylpyrimidine synthase (630 aa).

2 disordered regions span residues 1 to 22 and 97 to 120; these read MADI…TTGP and AQRE…VPAF. Substrate contacts are provided by residues N224, M253, Y282, H318, 338–340, 379–382, and E418; these read SRG and DGLR. H422 contacts Zn(2+). Y445 contacts substrate. H486 provides a ligand contact to Zn(2+). [4Fe-4S] cluster is bound by residues C566, C569, and C574.

It belongs to the ThiC family. As to quaternary structure, homodimer. [4Fe-4S] cluster is required as a cofactor.

The catalysed reaction is 5-amino-1-(5-phospho-beta-D-ribosyl)imidazole + S-adenosyl-L-methionine = 4-amino-2-methyl-5-(phosphooxymethyl)pyrimidine + CO + 5'-deoxyadenosine + formate + L-methionine + 3 H(+). Its pathway is cofactor biosynthesis; thiamine diphosphate biosynthesis. Catalyzes the synthesis of the hydroxymethylpyrimidine phosphate (HMP-P) moiety of thiamine from aminoimidazole ribotide (AIR) in a radical S-adenosyl-L-methionine (SAM)-dependent reaction. The protein is Phosphomethylpyrimidine synthase of Sphingopyxis alaskensis (strain DSM 13593 / LMG 18877 / RB2256) (Sphingomonas alaskensis).